The following is a 277-amino-acid chain: 4-deoxy-L-threo-5-hexosulose-uronate ketol-isomerase (277 aa).

Zn(2+) is bound by residues histidine 195, histidine 197, glutamate 202, and histidine 244.

It belongs to the KduI family. It depends on Zn(2+) as a cofactor.

The catalysed reaction is 5-dehydro-4-deoxy-D-glucuronate = 3-deoxy-D-glycero-2,5-hexodiulosonate. It functions in the pathway glycan metabolism; pectin degradation; 2-dehydro-3-deoxy-D-gluconate from pectin: step 4/5. Catalyzes the isomerization of 5-dehydro-4-deoxy-D-glucuronate to 3-deoxy-D-glycero-2,5-hexodiulosonate. In Oceanobacillus iheyensis (strain DSM 14371 / CIP 107618 / JCM 11309 / KCTC 3954 / HTE831), this protein is 4-deoxy-L-threo-5-hexosulose-uronate ketol-isomerase.